The sequence spans 119 residues: Basic phospholipase A2 (119 aa).

Disulfide bonds link C11–C72, C27–C118, C29–C45, C44–C100, C51–C93, C61–C86, and C79–C91. Ca(2+) is bound by residues Y28, G30, and G32. Residue H48 is part of the active site. D49 serves as a coordination point for Ca(2+). N82 carries N-linked (GlcNAc...) asparagine glycosylation. D94 is an active-site residue.

It belongs to the phospholipase A2 family. Group I subfamily. D49 sub-subfamily. It depends on Ca(2+) as a cofactor. As to expression, expressed by the venom gland.

The protein localises to the secreted. The catalysed reaction is a 1,2-diacyl-sn-glycero-3-phosphocholine + H2O = a 1-acyl-sn-glycero-3-phosphocholine + a fatty acid + H(+). Its function is as follows. Snake venom phospholipase A2 (PLA2) that shows weak myotoxicity and induces edema in mice. Shows no cytotoxicity in vitro. Has an anticoagulant effect in vitro. PLA2 catalyzes the calcium-dependent hydrolysis of the 2-acyl groups in 3-sn-phosphoglycerides. This is Basic phospholipase A2 from Micrurus mipartitus (Red-tailed coral snake).